The primary structure comprises 269 residues: Thiazole synthase (269 aa).

Residue Lys-109 is the Schiff-base intermediate with DXP of the active site. 1-deoxy-D-xylulose 5-phosphate is bound by residues Gly-170, Ala-196 to Gly-197, and Asn-218 to Thr-219.

It belongs to the ThiG family. Homotetramer. Forms heterodimers with either ThiH or ThiS.

It is found in the plastid. The protein resides in the chloroplast. It catalyses the reaction [ThiS sulfur-carrier protein]-C-terminal-Gly-aminoethanethioate + 2-iminoacetate + 1-deoxy-D-xylulose 5-phosphate = [ThiS sulfur-carrier protein]-C-terminal Gly-Gly + 2-[(2R,5Z)-2-carboxy-4-methylthiazol-5(2H)-ylidene]ethyl phosphate + 2 H2O + H(+). It participates in cofactor biosynthesis; thiamine diphosphate biosynthesis. Catalyzes the rearrangement of 1-deoxy-D-xylulose 5-phosphate (DXP) to produce the thiazole phosphate moiety of thiamine. Sulfur is provided by the thiocarboxylate moiety of the carrier protein ThiS. In vitro, sulfur can be provided by H(2)S. This chain is Thiazole synthase, found in Phaeodactylum tricornutum (strain CCAP 1055/1).